Here is a 506-residue protein sequence, read N- to C-terminus: Aluminum-activated malate transporter 7 (506 aa).

The next 6 membrane-spanning stretches (helical) occupy residues Val-28–Phe-48, Ala-52–Gly-72, Val-78–Ser-98, Pro-104–Phe-124, Arg-130–Phe-150, and Val-166–Gly-186. The tract at residues Asp-461 to Glu-485 is disordered. Residues Asp-467 to Glu-485 show a composition bias toward basic and acidic residues.

It belongs to the aromatic acid exporter (TC 2.A.85) family.

It localises to the membrane. Malate transporter. This Arabidopsis thaliana (Mouse-ear cress) protein is Aluminum-activated malate transporter 7 (ALMT7).